Here is a 669-residue protein sequence, read N- to C-terminus: DNA ligase (669 aa).

Residues 34–38 (DAEYD), 83–84 (SL), and glutamate 114 each bind NAD(+). The active-site N6-AMP-lysine intermediate is lysine 116. NAD(+) is bound by residues arginine 137, glutamate 171, lysine 287, and lysine 311. Residues cysteine 405, cysteine 408, cysteine 423, and cysteine 428 each contribute to the Zn(2+) site. Residues 591 to 669 (NVESYFAGKT…EERFLQELNK (79 aa)) enclose the BRCT domain.

It belongs to the NAD-dependent DNA ligase family. LigA subfamily. Mg(2+) serves as cofactor. Mn(2+) is required as a cofactor.

It catalyses the reaction NAD(+) + (deoxyribonucleotide)n-3'-hydroxyl + 5'-phospho-(deoxyribonucleotide)m = (deoxyribonucleotide)n+m + AMP + beta-nicotinamide D-nucleotide.. In terms of biological role, DNA ligase that catalyzes the formation of phosphodiester linkages between 5'-phosphoryl and 3'-hydroxyl groups in double-stranded DNA using NAD as a coenzyme and as the energy source for the reaction. It is essential for DNA replication and repair of damaged DNA. The protein is DNA ligase of Bacillus mycoides (strain KBAB4) (Bacillus weihenstephanensis).